The primary structure comprises 463 residues: Ribosomal protein uS12 methylthiotransferase RimO (463 aa).

Residues 1–26 are disordered; the sequence is MPAMSQNPPLLRPDLAPAPIFDTSRR. Residues 8–19 show a composition bias toward low complexity; sequence PPLLRPDLAPAP. Positions 30–140 constitute an MTTase N-terminal domain; the sequence is PTIGMVSLGC…VLDAVHHAVP (111 aa). Cys39, Cys75, Cys104, Cys171, Cys175, and Cys178 together coordinate [4Fe-4S] cluster. Positions 157 to 395 constitute a Radical SAM core domain; that stretch reads LTPRHYSYLK…MQKAQAISEA (239 aa). Residues 398–463 enclose the TRAM domain; it reads AAKVGHRIEV…AGEYDLWGRL (66 aa).

It belongs to the methylthiotransferase family. RimO subfamily. It depends on [4Fe-4S] cluster as a cofactor.

The protein resides in the cytoplasm. It catalyses the reaction L-aspartate(89)-[ribosomal protein uS12]-hydrogen + (sulfur carrier)-SH + AH2 + 2 S-adenosyl-L-methionine = 3-methylsulfanyl-L-aspartate(89)-[ribosomal protein uS12]-hydrogen + (sulfur carrier)-H + 5'-deoxyadenosine + L-methionine + A + S-adenosyl-L-homocysteine + 2 H(+). Catalyzes the methylthiolation of an aspartic acid residue of ribosomal protein uS12. The polypeptide is Ribosomal protein uS12 methylthiotransferase RimO (Paracoccus denitrificans (strain Pd 1222)).